Here is a 295-residue protein sequence, read N- to C-terminus: N-acetylmuramic acid 6-phosphate etherase (295 aa).

Residues 55-218 (AADALKQGGR…STGAMVKLGK (164 aa)) enclose the SIS domain. Glu83 (proton donor) is an active-site residue. Residue Glu114 is part of the active site.

The protein belongs to the GCKR-like family. MurNAc-6-P etherase subfamily. As to quaternary structure, homodimer.

It catalyses the reaction N-acetyl-D-muramate 6-phosphate + H2O = N-acetyl-D-glucosamine 6-phosphate + (R)-lactate. It participates in amino-sugar metabolism; 1,6-anhydro-N-acetylmuramate degradation. It functions in the pathway amino-sugar metabolism; N-acetylmuramate degradation. The protein operates within cell wall biogenesis; peptidoglycan recycling. Specifically catalyzes the cleavage of the D-lactyl ether substituent of MurNAc 6-phosphate, producing GlcNAc 6-phosphate and D-lactate. Together with AnmK, is also required for the utilization of anhydro-N-acetylmuramic acid (anhMurNAc) either imported from the medium or derived from its own cell wall murein, and thus plays a role in cell wall recycling. This is N-acetylmuramic acid 6-phosphate etherase from Yersinia pseudotuberculosis serotype O:1b (strain IP 31758).